The sequence spans 124 residues: Small ribosomal subunit protein uS12 (124 aa).

Residue D89 is modified to 3-methylthioaspartic acid.

Belongs to the universal ribosomal protein uS12 family. Part of the 30S ribosomal subunit. Contacts proteins S8 and S17. May interact with IF1 in the 30S initiation complex.

Its function is as follows. With S4 and S5 plays an important role in translational accuracy. Functionally, interacts with and stabilizes bases of the 16S rRNA that are involved in tRNA selection in the A site and with the mRNA backbone. Located at the interface of the 30S and 50S subunits, it traverses the body of the 30S subunit contacting proteins on the other side and probably holding the rRNA structure together. The combined cluster of proteins S8, S12 and S17 appears to hold together the shoulder and platform of the 30S subunit. The sequence is that of Small ribosomal subunit protein uS12 from Vibrio vulnificus (strain CMCP6).